Reading from the N-terminus, the 96-residue chain is Evasin P1100 (96 aa).

Residues 1–28 form the signal peptide; it reads MAFNVITFLQFSVFVVILFNINLHSASA. Intrachain disulfides connect C48/C67, C52/C69, and C63/C80. N51 carries N-linked (GlcNAc...) asparagine glycosylation. The N-linked (GlcNAc...) asparagine glycan is linked to N74.

It is found in the secreted. Functionally, salivary chemokine-binding protein which binds to host chemokines CXCL1, CXCL2, CXCL3, CXCL5, CXCL6, CXCL10, CXCL11 and CXCL13. The protein is Evasin P1100 of Ixodes ricinus (Common tick).